The primary structure comprises 176 residues: Ribosome maturation factor RimM (176 aa).

The region spanning 97-176 (EDDFYWRDLI…QICVDWDPGF (80 aa)) is the PRC barrel domain.

Belongs to the RimM family. Binds ribosomal protein uS19.

The protein resides in the cytoplasm. Functionally, an accessory protein needed during the final step in the assembly of 30S ribosomal subunit, possibly for assembly of the head region. Essential for efficient processing of 16S rRNA. May be needed both before and after RbfA during the maturation of 16S rRNA. It has affinity for free ribosomal 30S subunits but not for 70S ribosomes. The sequence is that of Ribosome maturation factor RimM from Colwellia psychrerythraea (strain 34H / ATCC BAA-681) (Vibrio psychroerythus).